A 365-amino-acid chain; its full sequence is S-adenosylmethionine decarboxylase proenzyme (365 aa).

Active-site residues include Glu31 and Glu34. Ser87 (schiff-base intermediate with substrate; via pyruvic acid) is an active-site residue. Ser87 carries the pyruvic acid (Ser); by autocatalysis modification. Cys101 acts as the Proton donor; for catalytic activity in catalysis. Catalysis depends on proton acceptor; for processing activity residues Ser248 and His263.

Belongs to the eukaryotic AdoMetDC family. Heterotetramer of two alpha and two beta chains. The cofactor is pyruvate. Is synthesized initially as an inactive proenzyme. Formation of the active enzyme involves a self-maturation process in which the active site pyruvoyl group is generated from an internal serine residue via an autocatalytic post-translational modification. Two non-identical subunits are generated from the proenzyme in this reaction, and the pyruvate is formed at the N-terminus of the alpha chain, which is derived from the carboxyl end of the proenzyme. The post-translation cleavage follows an unusual pathway, termed non-hydrolytic serinolysis, in which the side chain hydroxyl group of the serine supplies its oxygen atom to form the C-terminus of the beta chain, while the remainder of the serine residue undergoes an oxidative deamination to produce ammonia and the pyruvoyl group blocking the N-terminus of the alpha chain.

The enzyme catalyses S-adenosyl-L-methionine + H(+) = S-adenosyl 3-(methylsulfanyl)propylamine + CO2. The protein operates within amine and polyamine biosynthesis; S-adenosylmethioninamine biosynthesis; S-adenosylmethioninamine from S-adenosyl-L-methionine: step 1/1. This Onchocerca volvulus protein is S-adenosylmethionine decarboxylase proenzyme (smd-1).